The sequence spans 73 residues: MAKKDGAIEVEGRVVEPLPNAMFRIELENGHKVLAHISGKMRQHYIRILPEDRVVVELSPYDLTRGRIVYRYK.

The 73-residue stretch at 1 to 73 (MAKKDGAIEV…TRGRIVYRYK (73 aa)) folds into the S1-like domain.

This sequence belongs to the IF-1 family. As to quaternary structure, component of the 30S ribosomal translation pre-initiation complex which assembles on the 30S ribosome in the order IF-2 and IF-3, IF-1 and N-formylmethionyl-tRNA(fMet); mRNA recruitment can occur at any time during PIC assembly.

It is found in the cytoplasm. In terms of biological role, one of the essential components for the initiation of protein synthesis. Stabilizes the binding of IF-2 and IF-3 on the 30S subunit to which N-formylmethionyl-tRNA(fMet) subsequently binds. Helps modulate mRNA selection, yielding the 30S pre-initiation complex (PIC). Upon addition of the 50S ribosomal subunit IF-1, IF-2 and IF-3 are released leaving the mature 70S translation initiation complex. This is Translation initiation factor IF-1 from Mycolicibacterium gilvum (strain PYR-GCK) (Mycobacterium gilvum (strain PYR-GCK)).